The chain runs to 609 residues: MCGIVGYIGRREALPVLMDGLQRLEYRGYDSAGVALVAGGRTWVEKRKGRLSDLQTVLGNLPSGCRVGIGHTRWATHGRPSDRNAHPHTDTSGRFAVVHNGIIENYAELRAELERQGCVFRSETDTEVIPHLIASCYDGDLVRAVRRAVPRLRGAYAIAVVCQQEPDKIVAVRAASPLVIGLGEGELLLASDIPALLPYTRQVIVMEEGWLAELTPEGVTLTTVAGEPVQPQVMRVDWEPGQAERGGYAHFMLKEIHEQPRALRDTLTGRLDAATGLVTLSEVGLSAAEVRALRKVAMVACGTAAHAGLVGRYLIERLAGIPVEWDLASEYRYREPLVDEHTLFVAVSQSGETADTLAALREARSRGARVLAVTNVVGSTVAREADWVLYTWAGPEIAVASTKAYSTQVVALTLLAIWLGQQNGRIDPAEASALVSGLQHLPDQAGQTLSLEAAVKEAAEALAGHDDVFFIGRNLDYAVALEAQLKLKEISYIHAEAYAAGELKHGPLALITDGVPVVALNTQPDLAEKTISNIQETRARGAFVLGLAQEGDEETARHCDRIFYLPRTHRLLTPALAVIPMQLLAYYAATARGTDVDKPRNLAKSVTVE.

The Nucleophile; for GATase activity role is filled by cysteine 2. Positions 2–217 constitute a Glutamine amidotransferase type-2 domain; that stretch reads CGIVGYIGRR…EGWLAELTPE (216 aa). SIS domains are found at residues 286–425 and 458–599; these read SAAE…QNGR and AAEA…VDKP. The active-site For Fru-6P isomerization activity is the lysine 604.

As to quaternary structure, homodimer.

The protein localises to the cytoplasm. The enzyme catalyses D-fructose 6-phosphate + L-glutamine = D-glucosamine 6-phosphate + L-glutamate. Its function is as follows. Catalyzes the first step in hexosamine metabolism, converting fructose-6P into glucosamine-6P using glutamine as a nitrogen source. The polypeptide is Glutamine--fructose-6-phosphate aminotransferase [isomerizing] (Symbiobacterium thermophilum (strain DSM 24528 / JCM 14929 / IAM 14863 / T)).